The following is a 102-amino-acid chain: Keratinocyte differentiation-associated protein (102 aa).

The N-terminal stretch at 1–22 is a signal peptide; the sequence is MKIPILPVVALLSLLALHAVQG.

As to expression, expression restricted to suprabasal keratinocytes of the epidermis.

The protein localises to the secreted. Its function is as follows. May act as a soluble regulator of keratinocyte differentiation. May play an important role in embryonic skin morphogenesis. This is Keratinocyte differentiation-associated protein from Mus musculus (Mouse).